Consider the following 256-residue polypeptide: Stanniocalcin (256 aa).

The N-terminal stretch at 1-18 (MLAKFGLCAVFLVLGTAA) is a signal peptide. A propeptide spanning residues 19-33 (TFDTDPEEASPRRAR) is cleaved from the precursor. The N-linked (GlcNAc...) asparagine glycan is linked to Asn62. A disordered region spans residues 204–241 (QGSNQGPNSAPAGWRWPMGSPPSFKIQPSMRGRDPTHL).

The protein belongs to the stanniocalcin family. Homodimer; disulfide-linked. In terms of tissue distribution, produced and secreted by the corpuscles of Stannius.

The protein resides in the secreted. Its function is as follows. Its primary function is the prevention of hypercalcemia. Upon release into the circulation, it lowers calcium transport by the gills, thereby reducing its rate of influx from the environment into the extracellular compartment. STC also stimulates phosphate reabsorption by renal proximal tubules. The consequence of this action is increased levels of plasma phosphate, which combines with excess calcium and promotes its disposal into bone and scales. The sequence is that of Stanniocalcin (stc) from Oncorhynchus mykiss (Rainbow trout).